The following is a 547-amino-acid chain: MADNPTNLRNADFRKLLTSARSDRPAVSAFAKPADPKTGDDKPASFKHKHLKPAKFKKPQAAAHGKAKKEKTEADEDEAALKNILKNYRDRAAERRKQGDEKEDPSKLTAAYRAVPGDARSAQDQADLRKQAILESKYLGGDLEHTHLVKGLDYSLLNKVRSEIDKSDDDDDDDIDTAFDEKVTSSSSSSKPSEASLLAQELAQSHSENRMVRSLHRVLFKNEVPLHNQLFAKGRMAYVVELEDEETDIPTTLLRSLHDLPRAESAQSIQANNLIILKLSHVLSHLRAEPKKKKKEEFRVQLGSRDAPGAAAAAPGAKGDSIYDDLDDYVPSRKSRDSRDAGRRGSRRDRSRDRSRDRDRDRDRDNRDRYFEKSANSRREEEQNRREQQRERERAEQERRREREKEREQEKAKEREKKRKELEESSGYDECYPGGLVEMGGAWDSDEEADYSKMDAGPKKNQAVNRWDFDTEEEYASYMEGREALPKAAYQYGVKNGEGGRKNKKQSAVSDAKRLDRELNEINKIMDKRKAGGDGAGGGGDYKKPKY.

Disordered regions lie at residues 18 to 125 (TSAR…AQDQ), 164 to 202 (IDKS…AQEL), 288 to 459 (AEPK…AGPK), 496 to 515 (NGEG…AKRL), and 524 to 547 (KIMD…KPKY). Basic and acidic residues predominate over residues 34-44 (ADPKTGDDKPA). Residues 45–58 (SFKHKHLKPAKFKK) show a composition bias toward basic residues. A coiled-coil region spans residues 66–94 (KAKKEKTEADEDEAALKNILKNYRDRAAE). Residues 87 to 106 (NYRDRAAERRKQGDEKEDPS) show a composition bias toward basic and acidic residues. Positions 163 to 223 (EIDKSDDDDD…SLHRVLFKNE (61 aa)) are required and sufficient for interaction with smu-1. Over residues 166-178 (KSDDDDDDDIDTA) the composition is skewed to acidic residues. 2 stretches are compositionally biased toward low complexity: residues 185 to 196 (SSSSSSKPSEAS) and 307 to 317 (APGAAAAAPGA). Residues 330–423 (VPSRKSRDSR…EREKKRKELE (94 aa)) show a composition bias toward basic and acidic residues. 12 consecutive repeat copies span residues 336–337 (RD), 339–340 (RD), 348–349 (RD), 350–351 (RS), 352–353 (RD), 354–355 (RS), 356–357 (RD), 358–359 (RD), 360–361 (RD), 362–363 (RD), 364–365 (RD), and 367–368 (RD). The tract at residues 336–368 (RDSRDAGRRGSRRDRSRDRSRDRDRDRDRDNRD) is 12 X 2 AA repeats of R-[DS]. The stretch at 371–427 (FEKSANSRREEEQNRREQQRERERAEQERRREREKEREQEKAKEREKKRKELEESSG) forms a coiled coil.

The protein belongs to the RED family. Probable component of the spliceosome. Heterotetramer with smu-1. The smu-1 homodimer interacts (via the N-terminal region including the LisH and CTLH domains) with smu-2, giving rise to a heterotetramer. As to expression, ubiquitous.

It localises to the nucleus. Functionally, auxiliary spliceosomal protein that regulates selection of alternative splice sites in a small set of target pre-mRNA species. Selectively regulates alternative splicing of unc-52 exon 17. Thus, smu-2 mutants selectively suppress the effects of unc-52 nonsense mutations in exon 17 by promoting the accumulation of unc-52 isoforms that lack exon 17. In contrast, smu-2 mutants do not suppress the effects of an unc-52 mutation that affects the 5' splice site of exon 16. Required for normal accumulation of smu-1. This is Smu-2 suppressor of mec-8 and unc-52 protein from Caenorhabditis elegans.